Reading from the N-terminus, the 601-residue chain is DNA replication licensing factor MCM3 (601 aa).

One can recognise an MCM domain in the interval 180–386 (PINLLSKSIA…LDRRLSQHVL (207 aa)). 229–236 (GDPSTAKS) contacts ATP. Positions 361–364 (SRFD) match the Arginine finger motif.

Belongs to the MCM family. In terms of assembly, component of the MCM2-7 complex.

It localises to the nucleus. The protein localises to the chromosome. Its subcellular location is the nucleoplasm. It carries out the reaction ATP + H2O = ADP + phosphate + H(+). Acts as a component of the MCM2-7 complex (MCM complex) which is the replicative helicase essential for DNA replication initiation and elongation in eukaryotic cells. Required for DNA replication and cell proliferation. The active ATPase sites in the MCM2-7 ring are formed through the interaction surfaces of two neighboring subunits such that a critical structure of a conserved arginine finger motif is provided in trans relative to the ATP-binding site of the Walker A box of the adjacent subunit. This Entamoeba histolytica (strain ATCC 30459 / HM-1:IMSS / ABRM) protein is DNA replication licensing factor MCM3.